A 358-amino-acid polypeptide reads, in one-letter code: Methionine aminopeptidase 2 (358 aa).

His-109 lines the substrate pocket. A divalent metal cation-binding residues include Asp-130, Asp-141, and His-210. His-218 lines the substrate pocket. A divalent metal cation is bound by residues Glu-243 and Glu-339.

It belongs to the peptidase M24A family. Methionine aminopeptidase eukaryotic type 2 subfamily. It depends on Co(2+) as a cofactor. Zn(2+) is required as a cofactor. Requires Mn(2+) as cofactor. Fe(2+) serves as cofactor.

The protein localises to the cytoplasm. It carries out the reaction Release of N-terminal amino acids, preferentially methionine, from peptides and arylamides.. With respect to regulation, irreversibly inhibited by the fungal metabolite fumagillin and the fumagillin analog TNP470, antiangiogenic drugs. In terms of biological role, cotranslationally removes the N-terminal methionine from nascent proteins. The N-terminal methionine is often cleaved when the second residue in the primary sequence is small and uncharged (Met-Ala-, Cys, Gly, Pro, Ser, Thr, or Val). This Encephalitozoon hellem (strain ATCC 50504) (Microsporidian parasite) protein is Methionine aminopeptidase 2.